The chain runs to 338 residues: Uroporphyrinogen decarboxylase (338 aa).

Substrate contacts are provided by residues 25 to 29 (RQAGR), Phe-44, Asp-75, Tyr-146, Ser-201, and His-314.

This sequence belongs to the uroporphyrinogen decarboxylase family. Homodimer.

The protein resides in the cytoplasm. It catalyses the reaction uroporphyrinogen III + 4 H(+) = coproporphyrinogen III + 4 CO2. The protein operates within porphyrin-containing compound metabolism; protoporphyrin-IX biosynthesis; coproporphyrinogen-III from 5-aminolevulinate: step 4/4. In terms of biological role, catalyzes the decarboxylation of four acetate groups of uroporphyrinogen-III to yield coproporphyrinogen-III. The chain is Uroporphyrinogen decarboxylase from Aquifex aeolicus (strain VF5).